Consider the following 150-residue polypeptide: Arginine repressor (150 aa).

It belongs to the ArgR family.

The protein localises to the cytoplasm. Its pathway is amino-acid biosynthesis; L-arginine biosynthesis [regulation]. Regulates arginine biosynthesis genes. The sequence is that of Arginine repressor from Staphylococcus saprophyticus subsp. saprophyticus (strain ATCC 15305 / DSM 20229 / NCIMB 8711 / NCTC 7292 / S-41).